The sequence spans 360 residues: DNA replication and repair protein RecF (360 aa).

An ATP-binding site is contributed by Gly-30–Thr-37.

It belongs to the RecF family.

The protein localises to the cytoplasm. In terms of biological role, the RecF protein is involved in DNA metabolism; it is required for DNA replication and normal SOS inducibility. RecF binds preferentially to single-stranded, linear DNA. It also seems to bind ATP. This Shewanella loihica (strain ATCC BAA-1088 / PV-4) protein is DNA replication and repair protein RecF.